Reading from the N-terminus, the 248-residue chain is Probable transcriptional regulatory protein Avi_3631 (248 aa).

Belongs to the TACO1 family.

The protein resides in the cytoplasm. This is Probable transcriptional regulatory protein Avi_3631 from Allorhizobium ampelinum (strain ATCC BAA-846 / DSM 112012 / S4) (Agrobacterium vitis (strain S4)).